The sequence spans 99 residues: Small ribosomal subunit protein cS23 (99 aa).

Belongs to the chloroplast-specific ribosomal protein cS23 family. In terms of assembly, part of the 30S ribosomal subunit.

Its subcellular location is the plastid. It is found in the chloroplast. Functionally, probably a ribosomal protein or a ribosome-associated protein. This chain is Small ribosomal subunit protein cS23, found in Gracilaria tenuistipitata var. liui (Red alga).